Consider the following 201-residue polypeptide: Glycerol-3-phosphate acyltransferase (201 aa).

Helical transmembrane passes span 5-25, 55-75, 88-108, 118-138, and 164-184; these read LLGAVLVAAGYLAGSIPFGVV, KMGVLVLVLDAAKAIVPILLA, WSTAVAVAAFVGHLFPVWLGF, LGIFAVLAPWAALAGLVGYAV, and TYGVRHPVPWAGLAIALLIFL.

It belongs to the PlsY family. Probably interacts with PlsX.

The protein localises to the cell inner membrane. The catalysed reaction is an acyl phosphate + sn-glycerol 3-phosphate = a 1-acyl-sn-glycero-3-phosphate + phosphate. It participates in lipid metabolism; phospholipid metabolism. Catalyzes the transfer of an acyl group from acyl-phosphate (acyl-PO(4)) to glycerol-3-phosphate (G3P) to form lysophosphatidic acid (LPA). This enzyme utilizes acyl-phosphate as fatty acyl donor, but not acyl-CoA or acyl-ACP. The chain is Glycerol-3-phosphate acyltransferase from Anaeromyxobacter dehalogenans (strain 2CP-C).